A 331-amino-acid chain; its full sequence is Photosystem II assembly lipoprotein Ycf48 (331 aa).

Positions 1–23 (MIPVIRSFLSLLLCVGLTFGLGG) are cleaved as a signal peptide. Cysteine 24 carries the N-palmitoyl cysteine lipid modification. Residue cysteine 24 is the site of S-diacylglycerol cysteine attachment.

This sequence belongs to the Ycf48 family. As to quaternary structure, part of early PSII assembly complexes which includes D1 (psbA) and PsbI; not found in mature PSII. Binds to the lumenal side of PSII complexes. Interacts with YidC.

It is found in the cellular thylakoid membrane. A factor required for optimal assembly of photosystem II (PSII), acting in the early stages of PSII assembly. Also plays a role in replacement of photodamaged D1 (psbA). Assists YidC in synthesis of chlorophyll-binding proteins. The chain is Photosystem II assembly lipoprotein Ycf48 from Synechococcus sp. (strain RCC307).